Reading from the N-terminus, the 309-residue chain is Putative lipid kinase YtlR (309 aa).

Positions 1-134 constitute a DAGKc domain; sequence MSHWFFIINP…FHLGSVNFLQ (134 aa). Residues 9 to 13, Thr-40, and 69 to 75 each bind ATP; these read NPTAG and GDGTMHE. Positions 229, 232, and 234 each coordinate Mg(2+). Glu-289 serves as the catalytic Proton acceptor.

It belongs to the diacylglycerol/lipid kinase family. Requires Mg(2+) as cofactor.

In terms of biological role, may catalyze the ATP-dependent phosphorylation of lipids other than diacylglycerol (DAG). In fact, is not able to exhibit diacylglycerol kinase activity in vitro. In Bacillus subtilis (strain 168), this protein is Putative lipid kinase YtlR (ytlR).